The following is a 220-amino-acid chain: Phosphoserine phosphatase (220 aa).

Asp-11 functions as the Nucleophile in the catalytic mechanism. Positions 11 and 13 each coordinate Mg(2+). Asp-13 (proton donor) is an active-site residue. Substrate is bound by residues Glu-20, Arg-56, 99-100 (SG), and Lys-144. Asp-167 serves as a coordination point for Mg(2+). Position 170 (Asn-170) interacts with substrate.

The protein belongs to the HAD-like hydrolase superfamily. SerB family. Mg(2+) is required as a cofactor.

It catalyses the reaction O-phospho-L-serine + H2O = L-serine + phosphate. The catalysed reaction is O-phospho-D-serine + H2O = D-serine + phosphate. The protein operates within amino-acid biosynthesis; L-serine biosynthesis; L-serine from 3-phospho-D-glycerate: step 3/3. The polypeptide is Phosphoserine phosphatase (Idiomarina loihiensis (strain ATCC BAA-735 / DSM 15497 / L2-TR)).